Consider the following 525-residue polypeptide: Acyl-lipid (9-3)-desaturase (525 aa).

The Cytochrome b5 heme-binding domain maps to 102 to 176; it reads KSTHPLSEVA…LQDFYIGDVE (75 aa). Heme contacts are provided by histidine 137 and histidine 159. The helical transmembrane segment at 216 to 236 threads the bilayer; the sequence is VAIFAASIAIICWSKTISAVL. Residues 254-258 carry the Histidine box-1 motif; the sequence is HDFLH. A helical membrane pass occupies residues 266 to 286; it reads WLNEVVGYVIGNAVLGFSTGW. Residues 291–295 carry the Histidine box-2 motif; sequence HNLHH. Transmembrane regions (helical) follow at residues 340–360, 378–398, and 401–421; these read QHLFFMGLLFFARGSWLFWSW, GTVLFHYFWFVGTACYLLPGW, and LVWMAVTELMSGMLLGFVFVL. The Histidine box-3 motif lies at 462-466; that stretch reads QIEHH.

The protein belongs to the fatty acid desaturase type 1 family.

It is found in the membrane. The catalysed reaction is (9Z,12Z,15Z)-octadecatrienoyl-containing glycerolipid + 2 Fe(II)-[cytochrome b5] + O2 + 2 H(+) = (6Z,9Z,12Z,15Z)-octadecatetraenoyl-containing glycerolipid + 2 Fe(III)-[cytochrome b5] + 2 H2O. It carries out the reaction a (9Z,12Z)-octadecadienoyl-containing glycerolipid + 2 Fe(II)-[cytochrome b5] + O2 + 2 H(+) = (6Z,9Z,12Z)-octadecatrienoyl-containing glycerolipid + 2 Fe(III)-[cytochrome b5] + 2 H2O. It participates in lipid metabolism; polyunsaturated fatty acid biosynthesis. In terms of biological role, fatty acid desaturase able to introduce a delta(6)-double bond into delta(9)-unsaturated fatty-acid substrates. Can use both linoleic acid (18:2(9Z,12Z)) and alpha-linolenic acid (18:3(9Z,12Z,15Z)) as substrates. Required for the biosynthesis of arachidonic acid (20:4(5z,8Z,11Z,14Z)). The sequence is that of Acyl-lipid (9-3)-desaturase from Physcomitrium patens (Spreading-leaved earth moss).